A 374-amino-acid chain; its full sequence is Putative phosphoserine aminotransferase (374 aa).

Arg48 serves as a coordination point for L-glutamate. Pyridoxal 5'-phosphate contacts are provided by residues Ala82–Thr83, Phe106, Thr152, Asp174, and Gln197. An N6-(pyridoxal phosphate)lysine modification is found at Lys198. A pyridoxal 5'-phosphate-binding site is contributed by Asn249 to Thr250.

This sequence belongs to the class-V pyridoxal-phosphate-dependent aminotransferase family. SerC subfamily. Homodimer. Requires pyridoxal 5'-phosphate as cofactor.

It is found in the cytoplasm. The catalysed reaction is O-phospho-L-serine + 2-oxoglutarate = 3-phosphooxypyruvate + L-glutamate. It catalyses the reaction 4-(phosphooxy)-L-threonine + 2-oxoglutarate = (R)-3-hydroxy-2-oxo-4-phosphooxybutanoate + L-glutamate. It functions in the pathway amino-acid biosynthesis; L-serine biosynthesis; L-serine from 3-phospho-D-glycerate: step 2/3. It participates in cofactor biosynthesis; pyridoxine 5'-phosphate biosynthesis; pyridoxine 5'-phosphate from D-erythrose 4-phosphate: step 3/5. Functionally, catalyzes the reversible conversion of 3-phosphohydroxypyruvate to phosphoserine and of 3-hydroxy-2-oxo-4-phosphonooxybutanoate to phosphohydroxythreonine. The chain is Putative phosphoserine aminotransferase from Mycolicibacterium paratuberculosis (strain ATCC BAA-968 / K-10) (Mycobacterium paratuberculosis).